The following is an 86-amino-acid chain: Exodeoxyribonuclease 7 small subunit (86 aa).

This sequence belongs to the XseB family. As to quaternary structure, heterooligomer composed of large and small subunits.

Its subcellular location is the cytoplasm. The enzyme catalyses Exonucleolytic cleavage in either 5'- to 3'- or 3'- to 5'-direction to yield nucleoside 5'-phosphates.. Functionally, bidirectionally degrades single-stranded DNA into large acid-insoluble oligonucleotides, which are then degraded further into small acid-soluble oligonucleotides. This chain is Exodeoxyribonuclease 7 small subunit, found in Xanthomonas euvesicatoria pv. vesicatoria (strain 85-10) (Xanthomonas campestris pv. vesicatoria).